Consider the following 555-residue polypeptide: High-affinity gluconate transporter ght3 (555 aa).

The Cytoplasmic segment spans residues 1 to 9; it reads MNRFITSIL. Residues 10 to 30 form a helical membrane-spanning segment; it reads VVFISMSGWLQGADTGSISGI. Over 31–58 the chain is Extracellular; the sequence is LGMRDFQSRFADRYNPISNSYSYSAWRQ. The chain crosses the membrane as a helical span at residues 59-79; the sequence is ALLTGTINAGCLFGAMLSSPF. Topologically, residues 80-87 are cytoplasmic; the sequence is TERIGKKY. Residues 88–108 form a helical membrane-spanning segment; that stretch reads SICFFSGVYIIAELLLVTAVP. Residues 109-112 are Extracellular-facing; the sequence is SWIQ. The helical transmembrane segment at 113–133 threads the bilayer; the sequence is VLVGKILAGVGIGALSVLSPG. Topologically, residues 134 to 144 are cytoplasmic; it reads YQSEVAPPQIR. Residues 145–165 form a helical membrane-spanning segment; the sequence is GAVVATYQIFSTGAALVAACI. At 166-179 the chain is on the extracellular side; it reads NMGTHKLRKTASWR. The chain crosses the membrane as a helical span at residues 180–200; the sequence is TSFGINMLWGILLMVGVLFLP. The Cytoplasmic segment spans residues 201–266; it reads ESPRYLIYKG…IFGKDIRYRT (66 aa). Residues 267–285 traverse the membrane as a helical segment; sequence CLGFLVMLFRELIGNNYYF. The Extracellular portion of the chain corresponds to 286-301; that stretch reads YYATQVFKGTGMTDIF. The chain crosses the membrane as a helical span at residues 302-322; that stretch reads LPAVILGAINFGTTFGALYTI. At 323–328 the chain is on the cytoplasmic side; that stretch reads DNLGRR. The helical transmembrane segment at 329-349 threads the bilayer; that stretch reads NPLIFGAAFQSICFFIYAAVG. The Extracellular segment spans residues 350–363; sequence DRKLIYKNGTSDHR. Asparagine 357 carries N-linked (GlcNAc...) asparagine glycosylation. A helical transmembrane segment spans residues 364–384; it reads AGSVMIVFSCLFLFSYCCSWG. The Cytoplasmic portion of the chain corresponds to 385–404; it reads PMGWVIVGETFPIRYRSKCA. A helical transmembrane segment spans residues 405 to 425; that stretch reads SVATSGNWLGNFMISFFTPFI. Residues 426–432 are Extracellular-facing; that stretch reads NNAIGFK. A helical transmembrane segment spans residues 433–453; it reads LGYIYACINLFSSFMIFFLAK. The Cytoplasmic portion of the chain corresponds to 454-555; it reads ETKGLTLEEV…FSEDSHPTYI (102 aa). Over residues 492-509 the composition is skewed to basic and acidic residues; that stretch reads KEEEKREREKSKGIRGQE. The interval 492 to 555 is disordered; sequence KEEEKREREK…FSEDSHPTYI (64 aa). Positions 510 to 521 are enriched in acidic residues; it reads EEFIENADEDNN. A compositionally biased stretch (low complexity) spans 522–534; sequence DSSSSSGSVVSAV. Residues 545-555 show a composition bias toward basic and acidic residues; it reads RFSEDSHPTYI.

Belongs to the major facilitator superfamily. Sugar transporter (TC 2.A.1.1) family.

The protein resides in the membrane. Its function is as follows. High-affinity gluconate transporter. The protein is High-affinity gluconate transporter ght3 (ght3) of Schizosaccharomyces pombe (strain 972 / ATCC 24843) (Fission yeast).